Here is a 341-residue protein sequence, read N- to C-terminus: Follistatin (341 aa).

The signal sequence occupies residues 1 to 29; that stretch reads MLNERIQPGMIFLLTVSLCHFMEYRAVQA. One can recognise a TB domain in the interval 30-103; sequence GNCWLQQSKN…TCENVDCGPG (74 aa). 8 disulfide bridges follow: C32–C55, C42–C88, C56–C91, C95–C106, C100–C116, C118–C150, C122–C143, and C132–C164. A glycan (N-linked (GlcNAc...) asparagine) is linked at N72. Residues 94-117 enclose the Follistatin-like 1 domain; that stretch reads TCENVDCGPGKKCKMNKKNKPRCV. 3 consecutive Kazal-like domains span residues 100–166, 186–241, and 264–318; these read CGPG…KCKK, NAYC…KCIK, and RGRC…SCNS. A glycan (N-linked (GlcNAc...) asparagine) is linked at N124. One can recognise a Follistatin-like 2 domain in the interval 167 to 190; sequence TCRDVLCPGSSSCVVDQTNNAYCV. 3 disulfides stabilise this stretch: C192-C225, C196-C218, and C207-C239. Residues 244 to 268 form the Follistatin-like 3 domain; that stretch reads SCEDIQCSAGKKCLWDSRVGRGRCA. 3 cysteine pairs are disulfide-bonded: C270/C302, C274/C295, and C284/C316. N288 carries an N-linked (GlcNAc...) asparagine glycan. A compositionally biased stretch (acidic residues) spans 321–333; the sequence is EDTEEEEEEEEPD. The segment at 321–341 is disordered; sequence EDTEEEEEEEEPDYSFVISSW.

Monomer. In terms of tissue distribution, spemann organizer and notochord.

It is found in the secreted. Binds directly to activin and functions as an activin antagonist which plays a role in neural induction. The short isoform is a more potent inhibitor of activin than the long isoform. Specific inhibitor of the biosynthesis and secretion of pituitary follicle stimulating hormone (FSH). The chain is Follistatin (fst) from Xenopus laevis (African clawed frog).